The primary structure comprises 98 residues: NADH-ubiquinone oxidoreductase chain 4L (98 aa).

A run of 3 helical transmembrane segments spans residues 1–21 (MPSISTNIILAFTTALLGVLI), 26–46 (LMSSLLCLEGMMLSMFILVSL), and 61–81 (IILLVFAACEAAVGLALLVMV).

The protein belongs to the complex I subunit 4L family. In terms of assembly, core subunit of respiratory chain NADH dehydrogenase (Complex I) which is composed of 45 different subunits.

It localises to the mitochondrion inner membrane. The enzyme catalyses a ubiquinone + NADH + 5 H(+)(in) = a ubiquinol + NAD(+) + 4 H(+)(out). Its function is as follows. Core subunit of the mitochondrial membrane respiratory chain NADH dehydrogenase (Complex I) which catalyzes electron transfer from NADH through the respiratory chain, using ubiquinone as an electron acceptor. Part of the enzyme membrane arm which is embedded in the lipid bilayer and involved in proton translocation. In Galago senegalensis (Northern lesser bushbaby), this protein is NADH-ubiquinone oxidoreductase chain 4L (MT-ND4L).